Reading from the N-terminus, the 229-residue chain is uncharacterized protein (229 aa).

An N-terminal signal peptide occupies residues 1–17; sequence MKKIIALMLFLTFFAHA.

This is an uncharacterized protein from Escherichia coli O157:H7.